The following is a 34-amino-acid chain: Phallacidin proprotein 1 (34 aa).

A propeptide spanning residues 1–10 (MSDINATRLP) is cleaved from the precursor. Positions 11 to 17 (AWLVDCP) form a cross-link, cyclopeptide (Ala-Pro). Positions 12-16 (WLVDC) form a cross-link, 2'-cysteinyl-6'-hydroxytryptophan sulfoxide (Trp-Cys). Residues 18–34 (CVGDDVNRLLTRGESLC) constitute a propeptide that is removed on maturation.

It belongs to the MSDIN fungal toxin family. Processed by the macrocyclase-peptidase enzyme POPB to yield a toxic cyclic heptapeptide. POPB first removes 10 residues from the N-terminus. Conformational trapping of the remaining peptide forces the enzyme to release this intermediate rather than proceed to macrocyclization. The enzyme rebinds the remaining peptide in a different conformation and catalyzes macrocyclization of the N-terminal 7 residues.

Its function is as follows. Major toxin that belongs to the bicyclic heptapeptides called phallotoxins. Although structurally related to amatoxins, phallotoxins have a different mode of action, which is the stabilization of F-actin. Phallotoxins are poisonous when administered parenterally, but not orally because of poor absorption. This chain is Phallacidin proprotein 1, found in Amanita bisporigera (Destroying angel).